The chain runs to 350 residues: Uroporphyrinogen decarboxylase (350 aa).

Residues 28–32 (RQAGR), F47, D78, Y155, S210, and H325 contribute to the substrate site.

The protein belongs to the uroporphyrinogen decarboxylase family. As to quaternary structure, homodimer.

Its subcellular location is the cytoplasm. The enzyme catalyses uroporphyrinogen III + 4 H(+) = coproporphyrinogen III + 4 CO2. The protein operates within porphyrin-containing compound metabolism; protoporphyrin-IX biosynthesis; coproporphyrinogen-III from 5-aminolevulinate: step 4/4. Functionally, catalyzes the decarboxylation of four acetate groups of uroporphyrinogen-III to yield coproporphyrinogen-III. The polypeptide is Uroporphyrinogen decarboxylase (Synechocystis sp. (strain ATCC 27184 / PCC 6803 / Kazusa)).